The primary structure comprises 558 residues: Arginine--tRNA ligase (558 aa).

The short motif at 119 to 129 (ANPDGPLHVGH) is the 'HIGH' region element.

It belongs to the class-I aminoacyl-tRNA synthetase family.

It is found in the cytoplasm. The enzyme catalyses tRNA(Arg) + L-arginine + ATP = L-arginyl-tRNA(Arg) + AMP + diphosphate. The polypeptide is Arginine--tRNA ligase (Methanothrix thermoacetophila (strain DSM 6194 / JCM 14653 / NBRC 101360 / PT) (Methanosaeta thermophila)).